A 293-amino-acid chain; its full sequence is Methylsterol monooxygenase 1 (293 aa).

The next 2 helical transmembrane spans lie at Leu55–Ile75 and Gly100–Thr120. The 131-residue stretch at Gly144–Thr274 folds into the Fatty acid hydroxylase domain. The short motif at His157 to His161 is the Histidine box-1 element. The Histidine box-2 signature appears at His170–His174. A helical membrane pass occupies residues Phe199–Met219. Positions His249–Met255 match the Histidine box-3 motif.

It belongs to the sterol desaturase family. Fe cation is required as a cofactor. In terms of processing, ubiquitinated by MARCHF6, leading to proteasomal degradation.

Its subcellular location is the endoplasmic reticulum membrane. It catalyses the reaction 4,4-dimethyl-5alpha-cholest-7-en-3beta-ol + 6 Fe(II)-[cytochrome b5] + 3 O2 + 5 H(+) = 4alpha-carboxy-4beta-methyl-5alpha-cholest-7-ene-3beta-ol + 6 Fe(III)-[cytochrome b5] + 4 H2O. The enzyme catalyses 4,4-dimethyl-5alpha-cholesta-8,24-dien-3beta-ol + 6 Fe(II)-[cytochrome b5] + 3 O2 + 5 H(+) = 4beta-methylzymosterol-4alpha-carboxylate + 6 Fe(III)-[cytochrome b5] + 4 H2O. It carries out the reaction 4alpha-methylzymosterol + 6 Fe(II)-[cytochrome b5] + 3 O2 + 5 H(+) = 4alpha-carboxyzymosterol + 6 Fe(III)-[cytochrome b5] + 4 H2O. The catalysed reaction is 4alpha-methyl-5alpha-cholest-7-en-3beta-ol + 6 Fe(II)-[cytochrome b5] + 3 O2 + 5 H(+) = 4alpha-carboxy-5alpha-cholest-7-en-3beta-ol + 6 Fe(III)-[cytochrome b5] + 4 H2O. It catalyses the reaction 4,4-dimethyl-5alpha-cholest-8-en-3beta-ol + 6 Fe(II)-[cytochrome b5] + 3 O2 + 5 H(+) = 4alpha-carboxy-4beta-methyl-5alpha-cholest-8-en-3beta-ol + 6 Fe(III)-[cytochrome b5] + 4 H2O. The enzyme catalyses 4alpha-methyl-5alpha-cholest-8-en-3beta-ol + 6 Fe(II)-[cytochrome b5] + 3 O2 + 5 H(+) = 4alpha-carboxy-5alpha-cholest-8-ene-3beta-ol + 6 Fe(III)-[cytochrome b5] + 4 H2O. It participates in steroid biosynthesis; zymosterol biosynthesis; zymosterol from lanosterol: step 3/6. It functions in the pathway steroid biosynthesis; cholesterol biosynthesis. Its function is as follows. Catalyzes the three-step monooxygenation required for the demethylation of 4,4-dimethyl and 4alpha-methylsterols, which can be subsequently metabolized to cholesterol. The protein is Methylsterol monooxygenase 1 (Msmo1) of Rattus norvegicus (Rat).